The chain runs to 436 residues: 3-ketoacyl-CoA thiolase (436 aa).

Cysteine 99 serves as the catalytic Acyl-thioester intermediate. Catalysis depends on proton acceptor residues histidine 392 and cysteine 422.

This sequence belongs to the thiolase-like superfamily. Thiolase family. Heterotetramer of two alpha chains (FadJ) and two beta chains (FadI).

The protein resides in the cytoplasm. It carries out the reaction an acyl-CoA + acetyl-CoA = a 3-oxoacyl-CoA + CoA. It functions in the pathway lipid metabolism; fatty acid beta-oxidation. Catalyzes the final step of fatty acid oxidation in which acetyl-CoA is released and the CoA ester of a fatty acid two carbons shorter is formed. The chain is 3-ketoacyl-CoA thiolase from Serratia proteamaculans (strain 568).